A 69-amino-acid chain; its full sequence is Dermaseptin-H3 (69 aa).

An N-terminal signal peptide occupies residues 1 to 22 (MAFLKKSLFLVLFLGMVSLSIC). The propeptide occupies 23 to 43 (EEEKRENEDEEKQEDDEQSEM). A disordered region spans residues 24 to 44 (EEKRENEDEEKQEDDEQSEMK). A compositionally biased stretch (acidic residues) spans 30–40 (EDEEKQEDDEQ). Leucine 66 is subject to Leucine amide. Residues 68–69 (EQ) constitute a propeptide that is removed on maturation.

Belongs to the frog skin active peptide (FSAP) family. Dermaseptin subfamily. Expressed by the skin glands.

The protein localises to the secreted. In terms of biological role, possesses a potent antimicrobial activity against Gram-positive and Gram-negative bacteria. Probably acts by disturbing membrane functions with its amphipathic structure. This Pithecopus azureus (Orange-legged monkey tree frog) protein is Dermaseptin-H3.